A 295-amino-acid polypeptide reads, in one-letter code: Aquaporin NIP2-1 (295 aa).

A run of 2 helical transmembrane segments spans residues 49–69 (VVSE…AAGI) and 83–103 (SVAG…ISGA). An NPA 1 motif is present at residues 106–108 (NPA). Transmembrane regions (helical) follow at residues 124–146 (VPFY…KAVL), 164–184 (SLVI…AVAT), and 192–212 (LAGL…GAVS). The NPA 2 motif lies at 217–219 (NPA). The helical transmembrane segment at 230 to 250 (LYTGLWIYFLGPVLGTLSGAW) threads the bilayer.

This sequence belongs to the MIP/aquaporin (TC 1.A.8) family. NIP (TC 1.A.8.12) subfamily.

Its subcellular location is the membrane. Aquaporins facilitate the transport of water and small neutral solutes across cell membranes. This chain is Aquaporin NIP2-1 (NIP2-1), found in Zea mays (Maize).